The sequence spans 240 residues: 4-hydroxy-tetrahydrodipicolinate reductase (240 aa).

NAD(+) contacts are provided by residues glycine 8–methionine 13, glycine 78–threonine 80, and serine 102–methionine 105. Catalysis depends on histidine 134, which acts as the Proton donor/acceptor. Residue histidine 135 coordinates (S)-2,3,4,5-tetrahydrodipicolinate. The active-site Proton donor is lysine 138. Glycine 144–threonine 145 is a (S)-2,3,4,5-tetrahydrodipicolinate binding site.

This sequence belongs to the DapB family.

The protein resides in the cytoplasm. It catalyses the reaction (S)-2,3,4,5-tetrahydrodipicolinate + NAD(+) + H2O = (2S,4S)-4-hydroxy-2,3,4,5-tetrahydrodipicolinate + NADH + H(+). The catalysed reaction is (S)-2,3,4,5-tetrahydrodipicolinate + NADP(+) + H2O = (2S,4S)-4-hydroxy-2,3,4,5-tetrahydrodipicolinate + NADPH + H(+). It participates in amino-acid biosynthesis; L-lysine biosynthesis via DAP pathway; (S)-tetrahydrodipicolinate from L-aspartate: step 4/4. In terms of biological role, catalyzes the conversion of 4-hydroxy-tetrahydrodipicolinate (HTPA) to tetrahydrodipicolinate. This Rickettsia canadensis (strain McKiel) protein is 4-hydroxy-tetrahydrodipicolinate reductase.